The following is a 710-amino-acid chain: Zinc finger and BTB domain-containing protein 24 (710 aa).

The BTB domain maps to 37–103; that stretch reads CDITLIVENV…IYTGYLHASE (67 aa). Disordered regions lie at residues 134–176 and 202–256; these read APKP…EGRS and EEDS…SRRR. The segment at residues 159 to 171 is a DNA-binding region (a.T hook); the sequence is KRKRGRPRKANGL. Composition is skewed to basic and acidic residues over residues 202-219 and 231-244; these read EEDSVKLSEQTPEDKESE and PAEKDENFDPKAGD. C2H2-type zinc fingers lie at residues 293–315, 321–343, 349–371, 377–399, 405–427, 433–455, 461–483, and 489–511; these read ARCKDCDRVFKYSHFLAIHQRRH, FKCNECGKGFAQKHSLQVHTRMH, YTCTVCGKALTTKHSLLEHMSLH, FTCDQCGKYFSQKRQLKSHYRVH, PECSHCHRKFMDVSQLKKHLRTH, FTCEICGKSFTAKSSLQTHIRIH, YSCSICGKCFSDSSAKRRHCILH, and FSCPECGLQFARLDNLKAHLKIH. The disordered stretch occupies residues 651–676; the sequence is EQTTSSVPAADTGARATPVPSTRPGA.

It belongs to the krueppel C2H2-type zinc-finger protein family. As to quaternary structure, interacts with MN1. As to expression, widely expressed. Highest level in liver, testis and kidney.

The protein localises to the nucleus. Functionally, may be involved in BMP2-induced transcription. In Mus musculus (Mouse), this protein is Zinc finger and BTB domain-containing protein 24 (Zbtb24).